The primary structure comprises 415 residues: Glutamate-1-semialdehyde 2,1-aminomutase (415 aa).

An N6-(pyridoxal phosphate)lysine modification is found at Lys260.

This sequence belongs to the class-III pyridoxal-phosphate-dependent aminotransferase family. HemL subfamily. Requires pyridoxal 5'-phosphate as cofactor.

The protein localises to the cytoplasm. It carries out the reaction (S)-4-amino-5-oxopentanoate = 5-aminolevulinate. The protein operates within porphyrin-containing compound metabolism; protoporphyrin-IX biosynthesis; 5-aminolevulinate from L-glutamyl-tRNA(Glu): step 2/2. The polypeptide is Glutamate-1-semialdehyde 2,1-aminomutase (Methanoculleus marisnigri (strain ATCC 35101 / DSM 1498 / JR1)).